A 329-amino-acid chain; its full sequence is D-alanine--D-alanine ligase (329 aa).

The ATP-grasp domain occupies 120 to 326 (KLWYDAIGIP…FHEFLADCIN (207 aa)). 150–205 (AFDKWGKVFVKAARQGSSVGCYSVTNKQSVSQAVNDAFGYSEQVLVEKSVKPRELE) serves as a coordination point for ATP. The Mg(2+) site is built by aspartate 280, glutamate 293, and asparagine 295.

It belongs to the D-alanine--D-alanine ligase family. The cofactor is Mg(2+). Requires Mn(2+) as cofactor.

It localises to the cytoplasm. The catalysed reaction is 2 D-alanine + ATP = D-alanyl-D-alanine + ADP + phosphate + H(+). The protein operates within cell wall biogenesis; peptidoglycan biosynthesis. Functionally, cell wall formation. The sequence is that of D-alanine--D-alanine ligase from Vibrio campbellii (strain ATCC BAA-1116).